Here is a 140-residue protein sequence, read N- to C-terminus: Sec-independent protein translocase protein TatB (140 aa).

Residues 1-21 form a helical membrane-spanning segment; sequence MFDIGFSELLLIAVVALVVLG. The segment at 119–140 is disordered; the sequence is VHVTSPPPSTSTHGNNGQEKSQ. A compositionally biased stretch (polar residues) spans 128–140; the sequence is TSTHGNNGQEKSQ.

Belongs to the TatB family. In terms of assembly, the Tat system comprises two distinct complexes: a TatABC complex, containing multiple copies of TatA, TatB and TatC subunits, and a separate TatA complex, containing only TatA subunits. Substrates initially bind to the TatABC complex, which probably triggers association of the separate TatA complex to form the active translocon.

It is found in the cell inner membrane. Its function is as follows. Part of the twin-arginine translocation (Tat) system that transports large folded proteins containing a characteristic twin-arginine motif in their signal peptide across membranes. Together with TatC, TatB is part of a receptor directly interacting with Tat signal peptides. TatB may form an oligomeric binding site that transiently accommodates folded Tat precursor proteins before their translocation. In Xylella fastidiosa (strain 9a5c), this protein is Sec-independent protein translocase protein TatB.